The following is a 140-amino-acid chain: Large ribosomal subunit protein uL11 (140 aa).

This sequence belongs to the universal ribosomal protein uL11 family. Part of the ribosomal stalk of the 50S ribosomal subunit. Interacts with L10 and the large rRNA to form the base of the stalk. L10 forms an elongated spine to which L12 dimers bind in a sequential fashion forming a multimeric L10(L12)X complex. One or more lysine residues are methylated.

In terms of biological role, forms part of the ribosomal stalk which helps the ribosome interact with GTP-bound translation factors. The polypeptide is Large ribosomal subunit protein uL11 (Syntrophotalea carbinolica (strain DSM 2380 / NBRC 103641 / GraBd1) (Pelobacter carbinolicus)).